A 1033-amino-acid polypeptide reads, in one-letter code: Error-prone DNA polymerase (1033 aa).

It belongs to the DNA polymerase type-C family. DnaE2 subfamily.

It localises to the cytoplasm. It catalyses the reaction DNA(n) + a 2'-deoxyribonucleoside 5'-triphosphate = DNA(n+1) + diphosphate. Functionally, DNA polymerase involved in damage-induced mutagenesis and translesion synthesis (TLS). It is not the major replicative DNA polymerase. The polypeptide is Error-prone DNA polymerase (Teredinibacter turnerae (strain ATCC 39867 / T7901)).